We begin with the raw amino-acid sequence, 99 residues long: MANTKSAKKKIKVIRRRTIENKIQKFKMKKAIKEVKKALLAGDIEKAKELYSKAAKLIDQTAAKGVIHKNNASRKKSRLMKLINKYAALSTPQPEKKAQ.

Belongs to the bacterial ribosomal protein bS20 family.

In terms of biological role, binds directly to 16S ribosomal RNA. This Caldicellulosiruptor saccharolyticus (strain ATCC 43494 / DSM 8903 / Tp8T 6331) protein is Small ribosomal subunit protein bS20.